The following is a 470-amino-acid chain: NADH-quinone oxidoreductase subunit D (470 aa).

Residues 1-18 (MTPSTSTPHTSTAPHTST) show a composition bias toward low complexity. Residues 1-37 (MTPSTSTPHTSTAPHTSTGQSTDGAAQPGDGSSAYEA) form a disordered region.

This sequence belongs to the complex I 49 kDa subunit family. As to quaternary structure, NDH-1 is composed of 14 different subunits. Subunits NuoB, C, D, E, F, and G constitute the peripheral sector of the complex.

The protein localises to the cell membrane. It carries out the reaction a quinone + NADH + 5 H(+)(in) = a quinol + NAD(+) + 4 H(+)(out). Functionally, NDH-1 shuttles electrons from NADH, via FMN and iron-sulfur (Fe-S) centers, to quinones in the respiratory chain. The immediate electron acceptor for the enzyme in this species is believed to be a menaquinone. Couples the redox reaction to proton translocation (for every two electrons transferred, four hydrogen ions are translocated across the cytoplasmic membrane), and thus conserves the redox energy in a proton gradient. The polypeptide is NADH-quinone oxidoreductase subunit D (Frankia alni (strain DSM 45986 / CECT 9034 / ACN14a)).